A 399-amino-acid chain; its full sequence is Nicotinate phosphoribosyltransferase (399 aa).

Histidine 224 carries the phosphohistidine; by autocatalysis modification.

The protein belongs to the NAPRTase family. In terms of processing, transiently phosphorylated on a His residue during the reaction cycle. Phosphorylation strongly increases the affinity for substrates and increases the rate of nicotinate D-ribonucleotide production. Dephosphorylation regenerates the low-affinity form of the enzyme, leading to product release.

The enzyme catalyses nicotinate + 5-phospho-alpha-D-ribose 1-diphosphate + ATP + H2O = nicotinate beta-D-ribonucleotide + ADP + phosphate + diphosphate. It functions in the pathway cofactor biosynthesis; NAD(+) biosynthesis; nicotinate D-ribonucleotide from nicotinate: step 1/1. Its function is as follows. Catalyzes the synthesis of beta-nicotinate D-ribonucleotide from nicotinate and 5-phospho-D-ribose 1-phosphate at the expense of ATP. In Ectopseudomonas mendocina (strain ymp) (Pseudomonas mendocina), this protein is Nicotinate phosphoribosyltransferase.